We begin with the raw amino-acid sequence, 389 residues long: MGASDPEVAPWAPGGAAGMAGAGAGAGARGGAPAGVEARARDPPPAHRAHPRHPRPAAQPSARRMDGGPGAPGSGDNAPTTEALFVALGAGVTALSHPLLYVKLLIQVGHEPMPPTLGTNVLGRKVLYLPSFFTYAKYIVQVDGKIGLFRGLSPRLMSNALSTVTRGSMKKVFPPDEMEQVSNKDDMKTSLKKVVKETSYEMMMQCVSRMLAHPLHVISMRCMVQFVGREAKYSGVLSSIGKIFKEEGLLGFFVGLIPHLLGDVVFLWGCNLLAHFINAYLVDDSVSDTPGGLGNDQNPGSQFSQALAIRSYTKFVMGIAVSMLTYPFLLVGDLMAVNNCGLRAGLPPYSPVFKSWIHCWKYLSVQGQLFRGSSLLFRRVSSGSCFALE.

Residues M1–A78 form a disordered region. Topologically, residues M1–T93 are mitochondrial intermembrane. Over residues G15–P33 the composition is skewed to gly residues. The residue at position 29 (R29) is an Omega-N-methylarginine. Solcar repeat units follow at residues T81–D176 and K192–Y280. A helical membrane pass occupies residues A94–L104. The Cytoplasmic portion of the chain corresponds to L105–R155. Residues L156–D176 form a helical membrane-spanning segment. Residues E177 to R209 are Mitochondrial intermembrane-facing. A helical transmembrane segment spans residues M210–R229. At E230–V254 the chain is on the cytoplasmic side. Residues G255 to A279 traverse the membrane as a helical segment. Residues Y280–S322 are Mitochondrial intermembrane-facing. The chain crosses the membrane as a helical span at residues M323–L342. The Cytoplasmic segment spans residues R343–R371. A helical membrane pass occupies residues G372–E389.

It belongs to the mitochondrial carrier (TC 2.A.29) family. Interacts with PSEN1.

It localises to the mitochondrion outer membrane. Protein insertase that mediates insertion of transmembrane proteins into the mitochondrial outer membrane. Catalyzes insertion of proteins with alpha-helical transmembrane regions, such as signal-anchored, tail-anchored and multi-pass membrane proteins. Does not mediate insertion of beta-barrel transmembrane proteins. May play a role in apoptosis. This is Mitochondrial carrier homolog 1 (Mtch1) from Mus musculus (Mouse).